The sequence spans 903 residues: Translation initiation factor IF-2 (903 aa).

Disordered stretches follow at residues 57–171 (EKFK…QRRR) and 267–318 (PTPQ…EAVT). Residues 69 to 163 (KKEAKEPSEK…SEPQKPKESL (95 aa)) are compositionally biased toward basic and acidic residues. Residues 267 to 278 (PTPQPMQKTKQP) are compositionally biased toward low complexity. Residues 299–308 (RRARKKHKKP) show a composition bias toward basic residues. The tr-type G domain maps to 402-569 (PRAPVITIMG…IVLLQAEILE (168 aa)). The segment at 411–418 (GHVDHGKT) is G1. 411–418 (GHVDHGKT) lines the GTP pocket. The interval 436–440 (GITQH) is G2. The segment at 457–460 (DTPG) is G3. GTP is bound by residues 457 to 461 (DTPGH) and 511 to 514 (NKMD). Residues 511–514 (NKMD) form a G4 region. Residues 547–549 (SAK) form a G5 region.

The protein belongs to the TRAFAC class translation factor GTPase superfamily. Classic translation factor GTPase family. IF-2 subfamily.

The protein localises to the cytoplasm. Functionally, one of the essential components for the initiation of protein synthesis. Protects formylmethionyl-tRNA from spontaneous hydrolysis and promotes its binding to the 30S ribosomal subunits. Also involved in the hydrolysis of GTP during the formation of the 70S ribosomal complex. The sequence is that of Translation initiation factor IF-2 from Campylobacter curvus (strain 525.92).